Consider the following 563-residue polypeptide: Glucocorticoid modulatory element-binding protein 1 (563 aa).

Alanine 2 is subject to N-acetylalanine. The SAND domain occupies 72–156; that stretch reads ASTIEANEDM…RKMMDSGQID (85 aa). Zn(2+) is bound at residue cysteine 103. 4 residues coordinate DNA: lysine 129, lysine 133, lysine 136, and arginine 147. Positions 160, 164, and 168 each coordinate Zn(2+). The stretch at 304–355 forms a coiled coil; the sequence is MDTVKKVLDNRKNQVEQGEEQFLYTLTDLERQLEEQKKQAQDHRLKSQTVQN. Residues 360-385 form a disordered region; sequence PVSTPKPPKRPRLQRPASTTVLSPSP.

As to quaternary structure, homodimer, and heterodimer of GMEB1 and GMEB2. Interacts with TRIM63. Interacts with the glucocorticoid receptor (NR3C1) and NCOA2/TIF2. May interact with HSP27 and CREB-binding protein (CBP).

Its subcellular location is the nucleus. It is found in the cytoplasm. Its function is as follows. Trans-acting factor that binds to glucocorticoid modulatory elements (GME) present in the TAT (tyrosine aminotransferase) promoter and increases sensitivity to low concentrations of glucocorticoids. Also binds to the transferrin receptor promoter. This chain is Glucocorticoid modulatory element-binding protein 1 (GMEB1), found in Bos taurus (Bovine).